A 371-amino-acid chain; its full sequence is Aurora kinase (371 aa).

Polar residues-rich tracts occupy residues 1–15 (MSMK…SVSL) and 48–80 (RIST…YTTD). The interval 1–84 (MSMKQLETSM…SSYTTDPPSP (84 aa)) is disordered. Residues 99 to 350 (FEIGKALGKG…LKDMHKHPWI (252 aa)) enclose the Protein kinase domain. ATP contacts are provided by residues 105-113 (LGKGKFGKV) and lysine 128. The Proton acceptor role is filled by aspartate 222.

This sequence belongs to the protein kinase superfamily. Ser/Thr protein kinase family. Aurora subfamily.

Its subcellular location is the nucleus. It localises to the cytoplasm. It is found in the cytoskeleton. The protein localises to the spindle. The protein resides in the chromosome. Its subcellular location is the centromere. It localises to the kinetochore. It carries out the reaction L-seryl-[protein] + ATP = O-phospho-L-seryl-[protein] + ADP + H(+). The catalysed reaction is L-threonyl-[protein] + ATP = O-phospho-L-threonyl-[protein] + ADP + H(+). Its function is as follows. Component of the chromosomal passenger complex (CPC), a complex that acts as a key regulator of chromosome segregation and cytokinesis. Has a role in error-correction of aberrent kinetochore-microtubule attachments to ensure that sister kinetochores become bioriented and connect to opposite poles by promoting spindle assembly checkpoint signaling. This Yarrowia lipolytica (strain CLIB 122 / E 150) (Yeast) protein is Aurora kinase (IPL1).